The sequence spans 110 residues: UPF0122 protein BPUM_1495 (110 aa).

The protein belongs to the UPF0122 family.

Its function is as follows. Might take part in the signal recognition particle (SRP) pathway. This is inferred from the conservation of its genetic proximity to ftsY/ffh. May be a regulatory protein. The sequence is that of UPF0122 protein BPUM_1495 from Bacillus pumilus (strain SAFR-032).